The chain runs to 252 residues: 5'-nucleotidase SurE (252 aa).

Residues D8, D9, S40, and N93 each contribute to the a divalent metal cation site.

Belongs to the SurE nucleotidase family. It depends on a divalent metal cation as a cofactor.

The protein resides in the cytoplasm. It carries out the reaction a ribonucleoside 5'-phosphate + H2O = a ribonucleoside + phosphate. Its function is as follows. Nucleotidase that shows phosphatase activity on nucleoside 5'-monophosphates. In Methylocella silvestris (strain DSM 15510 / CIP 108128 / LMG 27833 / NCIMB 13906 / BL2), this protein is 5'-nucleotidase SurE.